The chain runs to 498 residues: ATP synthase subunit beta, chloroplastic (498 aa).

Phosphothreonine is present on Thr-6. Residue Ser-13 is modified to Phosphoserine. 172-179 (GGAGVGKT) is a binding site for ATP.

Belongs to the ATPase alpha/beta chains family. As to quaternary structure, F-type ATPases have 2 components, CF(1) - the catalytic core - and CF(0) - the membrane proton channel. CF(1) has five subunits: alpha(3), beta(3), gamma(1), delta(1), epsilon(1). CF(0) has four main subunits: a(1), b(1), b'(1) and c(9-12).

It localises to the plastid. Its subcellular location is the chloroplast thylakoid membrane. It catalyses the reaction ATP + H2O + 4 H(+)(in) = ADP + phosphate + 5 H(+)(out). Functionally, produces ATP from ADP in the presence of a proton gradient across the membrane. The catalytic sites are hosted primarily by the beta subunits. The chain is ATP synthase subunit beta, chloroplastic from Capsella bursa-pastoris (Shepherd's purse).